A 1097-amino-acid chain; its full sequence is Protein STICHEL-like 3 (1097 aa).

5 disordered regions span residues 1–22 (MTTT…NNRI), 74–168 (SLRD…YRIG), 220–293 (NVRP…GFGE), 321–358 (GRSL…DSSS), and 400–436 (DSDL…LTEK). A compositionally biased stretch (polar residues) spans 10 to 20 (RVASSSSTRNN). Over residues 95 to 113 (LPKKGDLVEGGRRSVDLKK) the composition is skewed to basic and acidic residues. The segment covering 126–136 (PVVNFGTSKVT) has biased composition (polar residues). Over residues 137–168 (PSDERSGPVSGERDSGRRVKREESSRKSYRIG) the composition is skewed to basic and acidic residues. The span at 227–241 (YGGGGGGGNTRGCAG) shows a compositional bias: gly residues. The segment covering 245–259 (RPKRRKFRGTRRVRG) has biased composition (basic residues). Composition is skewed to basic and acidic residues over residues 281-291 (VEKHDGEKEGF) and 332-345 (KGGR…RNGS). The span at 346 to 358 (DKMMIQSDDDSSS) shows a compositional bias: low complexity. Residues 411–429 (EKKHKKKSHVNARHRHRQQ) show a composition bias toward basic residues. 472–479 (GPNGTGKT) contributes to the ATP binding site. Zn(2+) is bound by residues Cys-491, Cys-500, Cys-503, and Cys-506. The stretch at 742–770 (KEDMEKLRQALKTLSEAEKQLRVSNDKLT) forms a coiled coil. Disordered stretches follow at residues 790–828 (SSTA…DSRK), 913–932 (DPRN…DKSL), and 956–1003 (VTES…SQSI). Basic and acidic residues-rich tracts occupy residues 796–807 (GGRESSDHHLDP) and 818–828 (GLDRRRGDSRK). A compositionally biased stretch (polar residues) spans 993–1003 (ASQSQNQSQSI).

This sequence belongs to the DnaX/STICHEL family.

The protein is Protein STICHEL-like 3 of Arabidopsis thaliana (Mouse-ear cress).